The following is a 251-amino-acid chain: 14-3-3-like protein (251 aa).

Belongs to the 14-3-3 family. Most abundant in roots and flowers.

The polypeptide is 14-3-3-like protein (Nicotiana tabacum (Common tobacco)).